A 222-amino-acid polypeptide reads, in one-letter code: Sigma non-opioid intracellular receptor 1 (222 aa).

Residues 1 to 7 (MGVAGPW) lie on the Lumenal side of the membrane. Residues 8–29 (VLRVGLGLGAFALLLQGLRGWL) form a helical membrane-spanning segment. Residues 30 to 222 (ACKRYEFQPA…ASAFFSTLGC (193 aa)) lie on the Cytoplasmic side of the membrane. Residues 98–105 (SLTEYVLL) form an important for ligand-binding region. A C-terminal hydrophobic region region spans residues 176 to 222 (FVPSTLAFALADTLFSTQDFITLFYTLRAYTKGLLLEASAFFSTLGC).

This sequence belongs to the ERG2 family. In terms of assembly, homotrimer.

The protein resides in the nucleus inner membrane. Its subcellular location is the nucleus outer membrane. The protein localises to the nucleus envelope. It localises to the cytoplasmic vesicle. It is found in the endoplasmic reticulum membrane. The protein resides in the membrane. May function in lipid transport from the endoplasmic reticulum and be involved in a wide array of cellular functions probably through regulation of the biogenesis of lipid microdomains at the plasma membrane. May regulate calcium efflux at the endoplasmic reticulum. The sequence is that of Sigma non-opioid intracellular receptor 1 (SIGMAR1) from Gallus gallus (Chicken).